A 554-amino-acid polypeptide reads, in one-letter code: Neutral amino acid transporter 9 (554 aa).

Residues Met1–Ser112 lie on the Cytoplasmic side of the membrane. The helical transmembrane segment at Ile113–Trp133 threads the bilayer. The important for arginine binding and amino acid transport stretch occupies residues Thr122–Ser127. Ser127 contributes to the arginine binding site. Residues Gly134–Gly139 lie on the Lumenal side of the membrane. Residues Phe140 to Arg160 traverse the membrane as a helical segment. Residues Val161–Arg191 lie on the Cytoplasmic side of the membrane. The chain crosses the membrane as a helical span at residues Trp192 to Phe218. Residues Asn219–Thr276 lie on the Lumenal side of the membrane. Residues Asn232, Asn241, Asn258, and Asn267 are each glycosylated (N-linked (GlcNAc...) asparagine). The cysteines at positions 248 and 417 are disulfide-linked. A helical membrane pass occupies residues Trp277–Leu293. Topologically, residues Pro294–Ser302 are cytoplasmic. The chain crosses the membrane as a helical span at residues Phe303–Ala327. The Lumenal portion of the chain corresponds to His328 to Arg349. A helical transmembrane segment spans residues Leu350–Ile370. Over Thr371–Ser387 the chain is Cytoplasmic. The helical transmembrane segment at Ile388–Phe408 threads the bilayer. The Lumenal portion of the chain corresponds to Pro409 to Asp430. A helical transmembrane segment spans residues Ile431–Leu451. A CARC motif motif is present at residues Arg437–Val447. The CRAC motif motif lies at Leu450–Arg456. Topologically, residues Gly452 to Phe472 are cytoplasmic. The helical transmembrane segment at His473–Pro493 threads the bilayer. Over Asn494–Arg500 the chain is Lumenal. Residues Phe501–Ile521 traverse the membrane as a helical segment. Residues Ser522–Ser533 lie on the Cytoplasmic side of the membrane. Residues Ile534–Met554 form a helical membrane-spanning segment.

This sequence belongs to the amino acid/polyamine transporter 2 family. SLC38A9 subfamily. Associated component of the Ragulator complex. Associated component of the Rag GTPases heterodimers. Glycosylated.

Its subcellular location is the lysosome membrane. The protein resides in the late endosome membrane. The catalysed reaction is L-leucine(in) = L-leucine(out). The enzyme catalyses L-tyrosine(in) = L-tyrosine(out). It catalyses the reaction L-glutamine(out) = L-glutamine(in). It carries out the reaction L-asparagine(out) = L-asparagine(in). Lysosomal amino acid transporter involved in the activation of mTORC1 in response to amino acid levels. Probably acts as an amino acid sensor of the Rag GTPases and Ragulator complexes, 2 complexes involved in amino acid sensing and activation of mTORC1, a signaling complex promoting cell growth in response to growth factors, energy levels, and amino acids. Following activation by amino acids, the Ragulator and Rag GTPases function as a scaffold recruiting mTORC1 to lysosomes where it is in turn activated. SLC38A9 mediates transport of amino acids with low capacity and specificity with a slight preference for polar amino acids. Acts as an arginine sensor. Following activation by arginine binding, mediates transport of L-glutamine, leucine and tyrosine with high efficiency, and is required for the efficient utilization of these amino acids after lysosomal protein degradation. However, the transport mechanism is not well defined and the role of sodium is not clear. Guanine exchange factor (GEF) that, upon arginine binding, stimulates GDP release from RRAGA and therefore activates the Rag GTPase heterodimer and the mTORC1 pathway in response to nutrient sufficiency. The polypeptide is Neutral amino acid transporter 9 (Xenopus tropicalis (Western clawed frog)).